The sequence spans 506 residues: MSFSVEVLAGIAIELQRGIGHQDRFQRLITTLRQVLACDASALLRYESGQFIPLAIDGLAQDVLGRRFTLEGHPRLEAIARAGDVVRFPADSDLPDPYDGLIPGQESLKVHACVGLPLFAGQNLIGALTFDAMTPAQFEVFSDEELRLIAALAAGALSNALLIEQLESQNMLPRSSAAFEPIKETHMIGLSPAMTQLKKEIEIVASSDLNVLIGGETGTGKELVAKAIHQGSPRAVNPLVYLNCAALPESVAESELFGHVKGAFTGAISNRSGKFEMADNGTLFLDEIGELSLALQAKLLRVLQYGDIQRVGDDRSLRVDVRVLAATNRDLREEVLAGRFRADLFHRLSVFPLFVPPLRERGNDVVLLAGYFCEQCRLRLGLSRVVLSPGARRHLLNYGWPGNVRELEHAIHRAVVLARATRAGDEVILEAQHFALSEDVLPAPPAESFLALPNCRNLRESTENFQRELIRQALAQNHHNWAASARALETDVANLHRLAKRLGLKD.

Asp57 is subject to 4-aspartylphosphate. A Sigma-54 factor interaction domain is found at 187-416 (MIGLSPAMTQ…LEHAIHRAVV (230 aa)). Residues 215-222 (GETGTGKE) and 278-287 (ADNGTLFLDE) contribute to the ATP site. A DNA-binding region (H-T-H motif) is located at residues 481–500 (WAASARALETDVANLHRLAK).

The protein operates within nitrogen metabolism; nitric oxide reduction. Functionally, required for the expression of anaerobic nitric oxide (NO) reductase, acts as a transcriptional activator for at least the norVW operon. Activation also requires sigma-54. This chain is Anaerobic nitric oxide reductase transcription regulator NorR, found in Salmonella arizonae (strain ATCC BAA-731 / CDC346-86 / RSK2980).